The following is an 899-amino-acid chain: Lipoxygenase 2, chloroplastic (899 aa).

Residues 1 to 57 (MLKPQIHKPHLVNKLPLGTPFIPSHASIASFSTTSLRTLSVQKCYRRYIRYTSSNIK) constitute a chloroplast transit peptide. The PLAT domain maps to 83-203 (ALTAVTVGLL…DNPDKRIFFL (121 aa)). Residues 206-899 (SYLPSETPEG…GKGVPYSISI (694 aa)) enclose the Lipoxygenase domain. Positions 252 to 286 (DPDTDSDMARPVLGGNEHPFPRRCRTGRKMTSTEP) are disordered. Fe cation is bound by residues H557, H562, H749, N753, and I899.

This sequence belongs to the lipoxygenase family. The cofactor is Fe cation. Confined to glandular trichomes in flowers.

It localises to the plastid. Its subcellular location is the chloroplast. The protein operates within lipid metabolism; oxylipin biosynthesis. In terms of biological role, plant lipoxygenases may be involved in a number of diverse aspects of plant physiology including growth and development, pest resistance, and senescence or responses to wounding. Catalyzes the hydroperoxidation of lipids containing a cis,cis-1,4-pentadiene structure. This is Lipoxygenase 2, chloroplastic from Tanacetum cinerariifolium (Dalmatian daisy).